The chain runs to 101 residues: Citrate lyase acyl carrier protein (101 aa).

S14 is modified (O-(phosphoribosyl dephospho-coenzyme A)serine).

Belongs to the CitD family. In terms of assembly, oligomer with a subunit composition of (alpha,beta,gamma)6.

The protein resides in the cytoplasm. In terms of biological role, covalent carrier of the coenzyme of citrate lyase. The sequence is that of Citrate lyase acyl carrier protein from Lacticaseibacillus casei (strain BL23) (Lactobacillus casei).